A 590-amino-acid chain; its full sequence is Arginine--tRNA ligase (590 aa).

The 'HIGH' region signature appears at 132–142; sequence PNTNKPLHLGH.

This sequence belongs to the class-I aminoacyl-tRNA synthetase family. Monomer.

It is found in the cytoplasm. The enzyme catalyses tRNA(Arg) + L-arginine + ATP = L-arginyl-tRNA(Arg) + AMP + diphosphate. This chain is Arginine--tRNA ligase, found in Treponema denticola (strain ATCC 35405 / DSM 14222 / CIP 103919 / JCM 8153 / KCTC 15104).